The following is a 143-amino-acid chain: Cytotoxic L-amino-acid oxidase (143 aa).

It belongs to the flavin monoamine oxidase family. The cofactor is FAD.

The catalysed reaction is an L-alpha-amino acid + O2 + H2O = a 2-oxocarboxylate + H2O2 + NH4(+). Cytotoxic L-amino acid oxidase with high oxidase activity towards DL-methionine and L-methionine, L-phenylalanine, DL-norleucine, L-isoleucine, L-arginine, L-tyrosine, and DL-leucine. Shows relatively low activity towards DL-lysine and L-lysine, DL-asparagine, DL-valine, L-histidine, DL-threonine, DL-tryptophan, and L-glutamic acid; and no activity towards L-cysteine, L-glycine, L-proline, L-oxyproline, DL-serine, and DL-aspartic acid. Does not use benzylamine, ethanolamine, diethylamine, meta- and para-phenylendiamine, ortho-, meta- and para-aminophenols, or putrescin as a substrate. Acts as a toxin by inducing chromatin condensation, as well as DNA and nucleus fragmentation, which are typical for apoptosis. Probably induces cell damage indirectly via the generation of free radicals and oxidant agents that can trigger cell impairment and apoptosis by a caspase-independent pathway. The polypeptide is Cytotoxic L-amino-acid oxidase (Amanita phalloides (Death cap)).